Here is a 422-residue protein sequence, read N- to C-terminus: 4-hydroxy-3-methylbut-2-en-1-yl diphosphate synthase (flavodoxin) (422 aa).

The [4Fe-4S] cluster site is built by Cys316, Cys319, Cys362, and Glu369.

It belongs to the IspG family. [4Fe-4S] cluster serves as cofactor.

The catalysed reaction is (2E)-4-hydroxy-3-methylbut-2-enyl diphosphate + oxidized [flavodoxin] + H2O + 2 H(+) = 2-C-methyl-D-erythritol 2,4-cyclic diphosphate + reduced [flavodoxin]. It participates in isoprenoid biosynthesis; isopentenyl diphosphate biosynthesis via DXP pathway; isopentenyl diphosphate from 1-deoxy-D-xylulose 5-phosphate: step 5/6. Its function is as follows. Converts 2C-methyl-D-erythritol 2,4-cyclodiphosphate (ME-2,4cPP) into 1-hydroxy-2-methyl-2-(E)-butenyl 4-diphosphate. This is 4-hydroxy-3-methylbut-2-en-1-yl diphosphate synthase (flavodoxin) from Ehrlichia ruminantium (strain Gardel).